We begin with the raw amino-acid sequence, 359 residues long: Mitochondrial calcium uniporter regulator 1 (359 aa).

The Mitochondrial intermembrane portion of the chain corresponds to 1 to 68 (MDCGSVGGQR…ARGGVSRASP (68 aa)). A helical transmembrane segment spans residues 69–85 (LLLLLLVPSPRLAAAAP). Residues 86–338 (RRQLGDWERS…LESHKLDNIK (253 aa)) lie on the Mitochondrial matrix side of the membrane. Residues 235–310 (EKSEFSALRA…VALHAQQDRA (76 aa)) are a coiled coil. The chain crosses the membrane as a helical span at residues 339 to 358 (YLAGSIFTCLTVALGFYRLW). A topological domain (mitochondrial intermembrane) is located at residue Ile359.

This sequence belongs to the CCDC90 family. In terms of assembly, interacts (via coiled coil regions) with MCU; the interaction is direct. Interacts with SMDT1/EMRE; the interaction is direct. Interacts with PPIF. As to expression, ubiquitously expressed.

The protein resides in the mitochondrion inner membrane. Its function is as follows. Key regulator of mitochondrial calcium uniporter (MCU) required for calcium entry into mitochondrion. Plays a direct role in uniporter-mediated calcium uptake via a direct interaction with MCU. Probably involved in the assembly of the membrane components of the uniporter complex (uniplex). In Homo sapiens (Human), this protein is Mitochondrial calcium uniporter regulator 1.